The primary structure comprises 277 residues: Shikimate dehydrogenase (NADP(+)) (277 aa).

Residues 18-20 (SKS) and Thr65 contribute to the shikimate site. The Proton acceptor role is filled by Lys69. Position 81 (Glu81) interacts with NADP(+). The shikimate site is built by Asn90 and Asp106. Residues 130–134 (GAGGA), 154–159 (NRTFSK), and Met217 contribute to the NADP(+) site. Residue Tyr219 coordinates shikimate. Residue Gly241 participates in NADP(+) binding.

It belongs to the shikimate dehydrogenase family. In terms of assembly, homodimer.

It carries out the reaction shikimate + NADP(+) = 3-dehydroshikimate + NADPH + H(+). The protein operates within metabolic intermediate biosynthesis; chorismate biosynthesis; chorismate from D-erythrose 4-phosphate and phosphoenolpyruvate: step 4/7. Its function is as follows. Involved in the biosynthesis of the chorismate, which leads to the biosynthesis of aromatic amino acids. Catalyzes the reversible NADPH linked reduction of 3-dehydroshikimate (DHSA) to yield shikimate (SA). This chain is Shikimate dehydrogenase (NADP(+)), found in Vibrio vulnificus (strain CMCP6).